The primary structure comprises 211 residues: MGISRDALHKHRLTGAARKCNYKKRKYELGRQAAKTKICSQGEEKRVRSIRVRGGHQKFRALRLDTGNFSWATEKITRKCRILNVVYNATSNDLVRTNTLVKGSIVQIDATPYKQWYETHYGVVVGKKKSAKKDGEAEQVVKKSASLLAKLASRAKGRVLDSAIESQIGEGRFFARITSRPGQVGKCDGYILEAKELEFYQRRLQKKKSAK.

The protein belongs to the eukaryotic ribosomal protein eS8 family.

The sequence is that of Small ribosomal subunit protein eS8 (rps8) from Dictyostelium discoideum (Social amoeba).